Consider the following 400-residue polypeptide: Serine/threonine transporter SstT (400 aa).

9 helical membrane passes run 14–34 (IIIAIILGIGVALLFPTVTPY), 48–68 (SVAPILVFVLVLSSIANFQVG), 76–96 (VLLLYVVGMLLAAFSAVIASL), 136–156 (AISEANFIGILAWAIGLGLAM), 177–197 (IIHKVIAFAPVGIFGLVAVTF), 211–231 (LLVVLLGTMLFVALVINPILV), 285–305 (IPLGATVNMAGAAVTITVLTL), 311–331 (LGIHVDLATMIILSVVATISA), and 349–371 (CSLFGISSEIAMQVVAVGMIISV).

This sequence belongs to the dicarboxylate/amino acid:cation symporter (DAACS) (TC 2.A.23) family.

Its subcellular location is the cell inner membrane. The enzyme catalyses L-serine(in) + Na(+)(in) = L-serine(out) + Na(+)(out). It carries out the reaction L-threonine(in) + Na(+)(in) = L-threonine(out) + Na(+)(out). Its function is as follows. Involved in the import of serine and threonine into the cell, with the concomitant import of sodium (symport system). This Acinetobacter baumannii (strain AB307-0294) protein is Serine/threonine transporter SstT.